A 225-amino-acid polypeptide reads, in one-letter code: UPF0758 protein SEQ_1136 (225 aa).

Residues 102 to 224 (PVLSSAQVAE…YYSFREKSDL (123 aa)) enclose the MPN domain. Residues His-173, His-175, and Asp-186 each contribute to the Zn(2+) site. The JAMM motif motif lies at 173-186 (HNHPSGLTKPSAND).

This sequence belongs to the UPF0758 family.

This chain is UPF0758 protein SEQ_1136, found in Streptococcus equi subsp. equi (strain 4047).